We begin with the raw amino-acid sequence, 94 residues long: Protein SKIP34 (94 aa).

Residues 1-27 (MCYGHNQSLSSRSSLRRRSHDGEDDSV) form a disordered region. A coiled-coil region spans residues 23–61 (EDDSVVDDLRDRLAETEARLRRARAREAELSRRLEHMKR).

In terms of assembly, interacts with SPK1B/ASK2.

The polypeptide is Protein SKIP34 (SKIP34) (Arabidopsis thaliana (Mouse-ear cress)).